The primary structure comprises 301 residues: Ribonuclease Z (301 aa).

Zn(2+)-binding residues include His60, His62, Asp64, His65, His137, Asp207, and His265. The active-site Proton acceptor is the Asp64.

The protein belongs to the RNase Z family. Homodimer. Zn(2+) is required as a cofactor.

The enzyme catalyses Endonucleolytic cleavage of RNA, removing extra 3' nucleotides from tRNA precursor, generating 3' termini of tRNAs. A 3'-hydroxy group is left at the tRNA terminus and a 5'-phosphoryl group is left at the trailer molecule.. Zinc phosphodiesterase, which displays some tRNA 3'-processing endonuclease activity. Probably involved in tRNA maturation, by removing a 3'-trailer from precursor tRNA. In Exiguobacterium sp. (strain ATCC BAA-1283 / AT1b), this protein is Ribonuclease Z.